The sequence spans 230 residues: UPF0758 protein Glov_0523 (230 aa).

Residues 108-230 enclose the MPN domain; that stretch reads RFTSPAQVFD…YFSFVESGLL (123 aa). Residues H179, H181, and D192 each coordinate Zn(2+). The JAMM motif motif lies at 179–192; that stretch reads HNHPSGDPAPSRED.

The protein belongs to the UPF0758 family.

The sequence is that of UPF0758 protein Glov_0523 from Trichlorobacter lovleyi (strain ATCC BAA-1151 / DSM 17278 / SZ) (Geobacter lovleyi).